The sequence spans 691 residues: Elongation factor G (691 aa).

The 276-residue stretch at 6–281 (SKYRNIGIMA…GVVDFLPSPI (276 aa)) folds into the tr-type G domain. Residues 15–22 (AHIDAGKT), 79–83 (DTPGH), and 133–136 (NKMD) contribute to the GTP site.

The protein belongs to the TRAFAC class translation factor GTPase superfamily. Classic translation factor GTPase family. EF-G/EF-2 subfamily.

Its subcellular location is the cytoplasm. In terms of biological role, catalyzes the GTP-dependent ribosomal translocation step during translation elongation. During this step, the ribosome changes from the pre-translocational (PRE) to the post-translocational (POST) state as the newly formed A-site-bound peptidyl-tRNA and P-site-bound deacylated tRNA move to the P and E sites, respectively. Catalyzes the coordinated movement of the two tRNA molecules, the mRNA and conformational changes in the ribosome. The sequence is that of Elongation factor G from Wolbachia pipientis wMel.